Consider the following 393-residue polypeptide: MTHTTLFTSESVSEGHPDKVADQISDAVLDALIGQDPNCRVACEAVVKSGMVFVAGEITTNAWADVEQITRNTVLQIGYNDPHLGFDGETCAVVTAIGKQSPDIVMGVDGREDQELGAGDQGLMFGYASRETDVFMPAPITYAHRLVRQQALLRKNGRLPWLRPDAKSQVTLRYENGKPVAADCIVLSTQHSPEISQESLREAVIDEIIKPIMPPHWLDKHTRFLVNPTGRFVIGGPVGDCGLTGRKIIVDTYGGMARHGGGCFSGKDPSKVDRSGAYAARYVAKNIVAGGLADRCEIQVSYAIGVAEPTSISVETFGTGKIDEVRIQQLIKEHFDLRPGKIIEELNLLRSIYKATATYGHFGREEPEFTWERTDKAEILREAAGLAAANVTN.

An ATP-binding site is contributed by His16. Asp18 is a Mg(2+) binding site. A K(+)-binding site is contributed by Glu44. Positions 57 and 100 each coordinate L-methionine. Residues 100-110 (QSPDIVMGVDG) form a flexible loop region. ATP-binding positions include 165–167 (DAK), 231–232 (RF), Asp240, 246–247 (RK), and Lys267. Asp240 is an L-methionine binding site. Lys271 provides a ligand contact to L-methionine.

It belongs to the AdoMet synthase family. Homotetramer; dimer of dimers. It depends on Mg(2+) as a cofactor. K(+) serves as cofactor.

Its subcellular location is the cytoplasm. The catalysed reaction is L-methionine + ATP + H2O = S-adenosyl-L-methionine + phosphate + diphosphate. It participates in amino-acid biosynthesis; S-adenosyl-L-methionine biosynthesis; S-adenosyl-L-methionine from L-methionine: step 1/1. In terms of biological role, catalyzes the formation of S-adenosylmethionine (AdoMet) from methionine and ATP. The overall synthetic reaction is composed of two sequential steps, AdoMet formation and the subsequent tripolyphosphate hydrolysis which occurs prior to release of AdoMet from the enzyme. The protein is S-adenosylmethionine synthase of Coxiella burnetii (strain CbuG_Q212) (Coxiella burnetii (strain Q212)).